Reading from the N-terminus, the 63-residue chain is uncharacterized protein (63 aa).

A compositionally biased stretch (basic and acidic residues) spans 1–17; the sequence is MRYTDSRKLTPETDANH. The segment at 1 to 32 is disordered; the sequence is MRYTDSRKLTPETDANHKTASPQPIRRISSQT. Residues 18–32 are compositionally biased toward polar residues; it reads KTASPQPIRRISSQT.

The protein to Y.enterocolitica HemP.

This is an uncharacterized protein from Escherichia coli (strain K12).